Consider the following 181-residue polypeptide: uncharacterized protein (181 aa).

This is an uncharacterized protein from Ictalurid herpesvirus 1 (strain Auburn) (IcHV-1).